Consider the following 1042-residue polypeptide: Protein phosphatase Slingshot homolog 1 (1042 aa).

The span at 1-12 (MALVTLQRSPTP) shows a compositional bias: polar residues. The tract at residues 1–29 (MALVTLQRSPTPSAASSSASNSELEAGSD) is disordered. N-acetylalanine is present on A2. Over residues 13-22 (SAASSSASNS) the composition is skewed to low complexity. S37 and S57 each carry phosphoserine. The DEK-C domain occupies 249–304 (ERTERLIKAKLRSIMMSQDLENVTSKEIRNELEKQMNCNLKEFKEFIDNEMLLILG). Positions 308–449 (KPSLIFDHLY…LSEYEGILDA (142 aa)) constitute a Tyrosine-protein phosphatase domain. The active-site Phosphocysteine intermediate is C393. S516 carries the post-translational modification Phosphoserine. Disordered regions lie at residues 576–609 (FGNS…ASTQ), 668–766 (MERH…PHCD), 858–900 (IPEE…LDHT), and 915–942 (PTSS…KPGL). Residues 675 to 693 (SSSAICTQPTFLPHVTSSP) are compositionally biased toward polar residues. Residues 697–712 (ASSRSRAPERPASGPA) are compositionally biased toward low complexity. Residues 886–900 (LQKSPTSTLPRLDHT) are compositionally biased toward polar residues. Position 889 is a phosphoserine (S889). Residues 889–1042 (SPTSTLPRLD…LKSPSRVNKS (154 aa)) are interaction with YWHAG. Over residues 917-935 (SSSISSNLTRSSSSDSIHS) the composition is skewed to low complexity. S970 carries the post-translational modification Phosphoserine. Residues 985–995 (SSEADTSTIAD) are compositionally biased toward polar residues. The tract at residues 985 to 1042 (SSEADTSTIADSQDAKCGLSSSFLPEPQSAPRDPAATSKSSGKSAPEHLKSPSRVNKS) is disordered.

This sequence belongs to the protein-tyrosine phosphatase family. As to quaternary structure, interacts with the 14-3-3 proteins YWHAB, YWHAG, YWHAQ, and YWHAZ. Interaction with 14-3-3 proteins inhibits phosphatase activity and also blocks recruitment to lamellipodia and stimulation by actin. Interacts with actin and this stimulates phosphatase activity. Interacts with LIMK1. In terms of processing, phosphorylated. Inhibitory phosphorylation by PAK4 promotes binding to YWHAZ. Phosphorylation at Ser-970 is decreased by stimuli which promote actin reorganization and lamellipodia formation. Can be dephosphorylated and activated by PPP3CA/calcineurin A. Phosphorylation decreases immediately prior to telophase. In terms of tissue distribution, expressed in brain, heart, kidney and thymus. Also expressed at lower levels in liver, skeletal muscle, small intestine and spleen.

The protein resides in the cytoplasm. Its subcellular location is the cytoskeleton. It localises to the cleavage furrow. It is found in the midbody. The enzyme catalyses O-phospho-L-tyrosyl-[protein] + H2O = L-tyrosyl-[protein] + phosphate. The catalysed reaction is O-phospho-L-seryl-[protein] + H2O = L-seryl-[protein] + phosphate. It catalyses the reaction O-phospho-L-threonyl-[protein] + H2O = L-threonyl-[protein] + phosphate. Its function is as follows. Protein phosphatase which regulates actin filament dynamics. Dephosphorylates and activates the actin binding/depolymerizing factor cofilin, which subsequently binds to actin filaments and stimulates their disassembly. Inhibitory phosphorylation of cofilin is mediated by LIMK1, which may also be dephosphorylated and inactivated by this protein. In Mus musculus (Mouse), this protein is Protein phosphatase Slingshot homolog 1.